We begin with the raw amino-acid sequence, 222 residues long: 2-amino-5-formylamino-6-ribosylaminopyrimidin-4(3H)-one 5'-monophosphate deformylase (222 aa).

The Fe cation site is built by Glu-29, His-31, Asp-40, and His-108.

This sequence belongs to the creatininase superfamily. FAPy deformylase family. Homodimer. It depends on Fe(2+) as a cofactor. The cofactor is Zn(2+).

It catalyses the reaction 2-amino-5-formylamino-6-(5-phospho-D-ribosylamino)pyrimidin-4(3H)-one + H2O = 2,5-diamino-6-(1-D-ribosylamino)pyrimidin-4(3H)-one 5'-phosphate + formate + H(+). It functions in the pathway cofactor biosynthesis; coenzyme F420 biosynthesis. The protein operates within cofactor biosynthesis; riboflavin biosynthesis. Functionally, catalyzes the hydrolysis of the formamide of 2-amino-5-formylamino-6-ribosylamino-4(3H)-pyrimidinone 5'-monophosphate (FAPy) to form 2,5-diamino-6-ribosylamino-4(3H)-pyrimidinone 5'-phosphate (APy). The sequence is that of 2-amino-5-formylamino-6-ribosylaminopyrimidin-4(3H)-one 5'-monophosphate deformylase from Methanocaldococcus infernus (strain DSM 11812 / JCM 15783 / ME).